The following is a 147-amino-acid chain: Histone-lysine N-methyltransferase, H3 lysine-37 specific (147 aa).

In terms of domain architecture, SET spans 8 to 116; that stretch reads SPLEIRDTER…TNEELCISYG (109 aa).

The protein belongs to the class V-like SAM-binding methyltransferase superfamily. As to quaternary structure, homodimer.

The protein resides in the cytoplasm. Its subcellular location is the nucleus. It carries out the reaction L-lysyl(37)-[histone H3] + S-adenosyl-L-methionine = N(6)-methyl-L-lysyl(37)-[histone H3] + S-adenosyl-L-homocysteine + H(+). The enzyme catalyses N(6)-methyl-L-lysyl(37)-[histone H3] + S-adenosyl-L-methionine = N(6),N(6)-dimethyl-L-lysyl(37)-[histone H3] + S-adenosyl-L-homocysteine + H(+). It catalyses the reaction N(6),N(6)-dimethyl-L-lysyl(37)-[histone H3] + S-adenosyl-L-methionine = N(6),N(6),N(6)-trimethyl-L-lysyl(37)-[histone H3] + S-adenosyl-L-homocysteine + H(+). Histone lysine methyltransferase that specifically mono-, di-, and trimethylates 'Lys-37' of histone H3 to regulate sporulation. In Schizosaccharomyces pombe (strain 972 / ATCC 24843) (Fission yeast), this protein is Histone-lysine N-methyltransferase, H3 lysine-37 specific.